Consider the following 282-residue polypeptide: 2,3,4,5-tetrahydropyridine-2,6-dicarboxylate N-succinyltransferase (282 aa).

The substrate site is built by R109 and D146.

It belongs to the transferase hexapeptide repeat family. In terms of assembly, homotrimer.

It localises to the cytoplasm. It carries out the reaction (S)-2,3,4,5-tetrahydrodipicolinate + succinyl-CoA + H2O = (S)-2-succinylamino-6-oxoheptanedioate + CoA. It functions in the pathway amino-acid biosynthesis; L-lysine biosynthesis via DAP pathway; LL-2,6-diaminopimelate from (S)-tetrahydrodipicolinate (succinylase route): step 1/3. This is 2,3,4,5-tetrahydropyridine-2,6-dicarboxylate N-succinyltransferase from Bartonella bacilliformis (strain ATCC 35685 / KC583 / Herrer 020/F12,63).